A 494-amino-acid polypeptide reads, in one-letter code: Probable cytosol aminopeptidase (494 aa).

Lys-260 and Asp-265 together coordinate Mn(2+). Lys-272 is an active-site residue. Mn(2+) contacts are provided by Asp-283, Asp-342, and Glu-344. Arg-346 is an active-site residue.

The protein belongs to the peptidase M17 family. It depends on Mn(2+) as a cofactor.

The protein resides in the cytoplasm. The catalysed reaction is Release of an N-terminal amino acid, Xaa-|-Yaa-, in which Xaa is preferably Leu, but may be other amino acids including Pro although not Arg or Lys, and Yaa may be Pro. Amino acid amides and methyl esters are also readily hydrolyzed, but rates on arylamides are exceedingly low.. It carries out the reaction Release of an N-terminal amino acid, preferentially leucine, but not glutamic or aspartic acids.. Functionally, presumably involved in the processing and regular turnover of intracellular proteins. Catalyzes the removal of unsubstituted N-terminal amino acids from various peptides. The protein is Probable cytosol aminopeptidase of Bacillus cereus (strain Q1).